Here is a 407-residue protein sequence, read N- to C-terminus: Betaine--homocysteine S-methyltransferase 1 (407 aa).

The Hcy-binding domain maps to R11–L314. 3 positions are modified to N6-succinyllysine: K40, K93, and K98. C217 is a Zn(2+) binding site. K232 and K241 each carry N6-succinyllysine. Zn(2+) is bound by residues C299 and C300. S330 is subject to Phosphoserine. K340 and K377 each carry N6-succinyllysine.

As to quaternary structure, homotetramer. Requires Zn(2+) as cofactor. As to expression, highly expressed in liver and kidney (at protein level). Expressed at lower levels in testis, lung, cerebellum, skeletal muscle and pancreas (at protein level).

The protein resides in the cytoplasm. The protein localises to the cytosol. Its subcellular location is the nucleus. It carries out the reaction L-homocysteine + glycine betaine = N,N-dimethylglycine + L-methionine. The protein operates within amine and polyamine degradation; betaine degradation; sarcosine from betaine: step 1/2. It participates in amino-acid biosynthesis; L-methionine biosynthesis via de novo pathway; L-methionine from L-homocysteine (BhmT route): step 1/1. Functionally, involved in the regulation of homocysteine metabolism. Converts betaine and homocysteine to dimethylglycine and methionine, respectively. This reaction is also required for the irreversible oxidation of choline. This Rattus norvegicus (Rat) protein is Betaine--homocysteine S-methyltransferase 1.